A 370-amino-acid polypeptide reads, in one-letter code: Cyanuric acid amidohydrolase (370 aa).

Residues 1–106 (MRTTSVGVFK…TVFTRREVER (106 aa)) are RU A. Residues arginine 54 and 85–86 (SG) each bind substrate. The tract at residues 115 to 251 (RLSIGMAHTR…NVVIVLGNSA (137 aa)) is RU B. Residue lysine 165 is part of the active site. Substrate is bound by residues arginine 197 and 234–235 (SA). Catalysis depends on serine 234, which acts as the Nucleophile. The tract at residues 257–370 (FEIGHAVMND…PVAVIARLSD (114 aa)) is RU C. Glutamate 302 contributes to the Mg(2+) binding site. Substrate contacts are provided by residues arginine 329 and 348–349 (SG). Residues alanine 351, glutamine 354, glycine 355, proline 356, and glycine 359 each contribute to the Mg(2+) site.

It belongs to the cyclic amide hydrolase (CyAH) family. Homotetramer.

The enzyme catalyses cyanurate + H2O = 1-carboxybiuret + H(+). It functions in the pathway xenobiotic degradation; atrazine degradation; biuret from cyanurate: step 1/1. Its activity is regulated as follows. Inhibited by barbituric acid. Its function is as follows. Responsible for the hydrolysis of cyanuric acid, an intermediate formed during catabolism of s-triazine based compounds in herbicides such as atrazine and polymers such as melamine. Catalyzes the hydrolytic opening of the s-triazine ring of cyanuric acid (2,4,6-trihydroxy-s-triazine) to yield carbon dioxide and carboxybiuret, which spontaneously decarboxylates to biuret. This Bradyrhizobium diazoefficiens (strain JCM 10833 / BCRC 13528 / IAM 13628 / NBRC 14792 / USDA 110) protein is Cyanuric acid amidohydrolase.